Here is a 227-residue protein sequence, read N- to C-terminus: PKHD-type hydroxylase Pden_4677 (227 aa).

The Fe2OG dioxygenase domain maps to 78 to 178 (HILPPMFNRY…RWASFFWAQS (101 aa)). Fe cation is bound by residues His96, Asp98, and His159. Position 169 (Arg169) interacts with 2-oxoglutarate.

Fe(2+) is required as a cofactor. The cofactor is L-ascorbate.

In Paracoccus denitrificans (strain Pd 1222), this protein is PKHD-type hydroxylase Pden_4677.